Here is a 183-residue protein sequence, read N- to C-terminus: MKLLFPIFASLMLQYQVNTEFIGLRRCLMGLGRCRDHCNVDEKEIQKCKMKKCCVGPKVVKLIKNYLQYGTPNVLNEDVQEMLKPAKNSSAVIQRKHILSVLPQIKSTSFFANTNFVIIPNATPMNSATISTMTPGQITYTATSTKSNTKESRDSATASPPPAPPPPNILPTPSLELEEAEEQ.

An N-terminal signal peptide occupies residues 1–19 (MKLLFPIFASLMLQYQVNT). 3 cysteine pairs are disulfide-bonded: cysteine 27–cysteine 53, cysteine 34–cysteine 48, and cysteine 38–cysteine 54. Residues 141 to 183 (TATSTKSNTKESRDSATASPPPAPPPPNILPTPSLELEEAEEQ) are disordered. Positions 159 to 170 (SPPPAPPPPNIL) are enriched in pro residues.

Belongs to the beta-defensin family.

The protein localises to the secreted. Has antibacterial activity. The chain is Beta-defensin 129 (DEFB129) from Pan troglodytes (Chimpanzee).